The primary structure comprises 418 residues: Geranylgeranyl pyrophosphate synthase (418 aa).

A compositionally biased stretch (polar residues) spans 51–64; the sequence is TSSTGIPTSLNATP. A disordered region spans residues 51 to 73; it reads TSSTGIPTSLNATPTKPVLRPVP. Positions 143, 146, and 175 each coordinate isopentenyl diphosphate. Asp182 and Asp186 together coordinate Mg(2+). Arg191 provides a ligand contact to dimethylallyl diphosphate. Arg192 serves as a coordination point for isopentenyl diphosphate. Residues Lys269, Thr270, Gln305, Lys322, and Lys332 each coordinate dimethylallyl diphosphate.

Belongs to the FPP/GGPP synthase family. Requires Mg(2+) as cofactor.

Its subcellular location is the cytoplasm. The catalysed reaction is isopentenyl diphosphate + dimethylallyl diphosphate = (2E)-geranyl diphosphate + diphosphate. It carries out the reaction isopentenyl diphosphate + (2E)-geranyl diphosphate = (2E,6E)-farnesyl diphosphate + diphosphate. It catalyses the reaction isopentenyl diphosphate + (2E,6E)-farnesyl diphosphate = (2E,6E,10E)-geranylgeranyl diphosphate + diphosphate. Its pathway is isoprenoid biosynthesis; farnesyl diphosphate biosynthesis; farnesyl diphosphate from geranyl diphosphate and isopentenyl diphosphate: step 1/1. It functions in the pathway isoprenoid biosynthesis; geranyl diphosphate biosynthesis; geranyl diphosphate from dimethylallyl diphosphate and isopentenyl diphosphate: step 1/1. The protein operates within isoprenoid biosynthesis; geranylgeranyl diphosphate biosynthesis; geranylgeranyl diphosphate from farnesyl diphosphate and isopentenyl diphosphate: step 1/1. Its function is as follows. Catalyzes the trans-addition of the three molecules of IPP onto DMAPP to form geranylgeranyl pyrophosphate. The sequence is that of Geranylgeranyl pyrophosphate synthase (GGS) from Fusarium fujikuroi (Bakanae and foot rot disease fungus).